The sequence spans 268 residues: Shikimate kinase (268 aa).

70–80 contributes to the ATP binding site; it reads PSGYGLKSSSA.

This sequence belongs to the GHMP kinase family. Archaeal shikimate kinase subfamily.

The protein resides in the cytoplasm. It carries out the reaction shikimate + ATP = 3-phosphoshikimate + ADP + H(+). Its pathway is metabolic intermediate biosynthesis; chorismate biosynthesis; chorismate from D-erythrose 4-phosphate and phosphoenolpyruvate: step 5/7. In Thermoplasma acidophilum (strain ATCC 25905 / DSM 1728 / JCM 9062 / NBRC 15155 / AMRC-C165), this protein is Shikimate kinase (aroK).